A 197-amino-acid chain; its full sequence is Holliday junction branch migration complex subunit RuvA (197 aa).

The domain I stretch occupies residues 1–64 (MIDSIVGTIQ…LSELECYGFL (64 aa)). A domain II region spans residues 65–143 (TREERELFLK…KEFKVASTSG (79 aa)). A flexible linker region spans residues 144–152 (TEEKTYEKL). Positions 152–197 (LEEISLALLSLGYEIDEINQVLSSEDFSELSLEDGIKLALKKLSKI) are domain III.

This sequence belongs to the RuvA family. Homotetramer. Forms an RuvA(8)-RuvB(12)-Holliday junction (HJ) complex. HJ DNA is sandwiched between 2 RuvA tetramers; dsDNA enters through RuvA and exits via RuvB. An RuvB hexamer assembles on each DNA strand where it exits the tetramer. Each RuvB hexamer is contacted by two RuvA subunits (via domain III) on 2 adjacent RuvB subunits; this complex drives branch migration. In the full resolvosome a probable DNA-RuvA(4)-RuvB(12)-RuvC(2) complex forms which resolves the HJ.

The protein resides in the cytoplasm. The RuvA-RuvB-RuvC complex processes Holliday junction (HJ) DNA during genetic recombination and DNA repair, while the RuvA-RuvB complex plays an important role in the rescue of blocked DNA replication forks via replication fork reversal (RFR). RuvA specifically binds to HJ cruciform DNA, conferring on it an open structure. The RuvB hexamer acts as an ATP-dependent pump, pulling dsDNA into and through the RuvAB complex. HJ branch migration allows RuvC to scan DNA until it finds its consensus sequence, where it cleaves and resolves the cruciform DNA. The polypeptide is Holliday junction branch migration complex subunit RuvA (Caldicellulosiruptor saccharolyticus (strain ATCC 43494 / DSM 8903 / Tp8T 6331)).